A 102-amino-acid chain; its full sequence is Ribosomal silencing factor RsfS (102 aa).

The protein belongs to the Iojap/RsfS family. In terms of assembly, interacts with ribosomal protein uL14 (rplN).

The protein localises to the cytoplasm. In terms of biological role, functions as a ribosomal silencing factor. Interacts with ribosomal protein uL14 (rplN), blocking formation of intersubunit bridge B8. Prevents association of the 30S and 50S ribosomal subunits and the formation of functional ribosomes, thus repressing translation. This chain is Ribosomal silencing factor RsfS, found in Haemophilus influenzae (strain ATCC 51907 / DSM 11121 / KW20 / Rd).